The sequence spans 171 residues: Peptide deformylase 1 (171 aa).

Cysteine 99 and histidine 141 together coordinate Fe cation. Glutamate 142 is an active-site residue. Histidine 145 serves as a coordination point for Fe cation.

It belongs to the polypeptide deformylase family. Fe(2+) serves as cofactor.

The enzyme catalyses N-terminal N-formyl-L-methionyl-[peptide] + H2O = N-terminal L-methionyl-[peptide] + formate. Functionally, removes the formyl group from the N-terminal Met of newly synthesized proteins. Requires at least a dipeptide for an efficient rate of reaction. N-terminal L-methionine is a prerequisite for activity but the enzyme has broad specificity at other positions. The polypeptide is Peptide deformylase 1 (Xanthomonas campestris pv. campestris (strain ATCC 33913 / DSM 3586 / NCPPB 528 / LMG 568 / P 25)).